Consider the following 136-residue polypeptide: Large ribosomal subunit protein uL16 (136 aa).

This sequence belongs to the universal ribosomal protein uL16 family. As to quaternary structure, part of the 50S ribosomal subunit.

Functionally, binds 23S rRNA and is also seen to make contacts with the A and possibly P site tRNAs. The polypeptide is Large ribosomal subunit protein uL16 (Shewanella pealeana (strain ATCC 700345 / ANG-SQ1)).